The sequence spans 302 residues: RNA polymerase II holoenzyme cyclin-like subunit (302 aa).

The region spanning 53 to 142 is the Cyclin N-terminal domain; that stretch reads QQLIKLGKRM…LGECEFSLIS (90 aa).

It belongs to the cyclin family. Cyclin C subfamily. As to quaternary structure, component of the srb8-11 complex, a regulatory module of the Mediator complex.

Its subcellular location is the nucleus. Its function is as follows. Component of the srb8-11 complex. The srb8-11 complex is a regulatory module of the Mediator complex which is itself involved in regulation of basal and activated RNA polymerase II-dependent transcription. The srb8-11 complex may be involved in the transcriptional repression of a subset of genes regulated by Mediator. It may inhibit the association of the Mediator complex with RNA polymerase II to form the holoenzyme complex. The srb8-11 complex phosphorylates the C-terminal domain (CTD) of the largest subunit of RNA polymerase II. In Aspergillus clavatus (strain ATCC 1007 / CBS 513.65 / DSM 816 / NCTC 3887 / NRRL 1 / QM 1276 / 107), this protein is RNA polymerase II holoenzyme cyclin-like subunit (ssn8).